A 225-amino-acid polypeptide reads, in one-letter code: Ribosome maturation factor RimM (225 aa).

Residues 144–225 enclose the PRC barrel domain; sequence ADEFYWVDLI…RIVVDWEADY (82 aa).

The protein belongs to the RimM family. In terms of assembly, binds ribosomal protein uS19.

It localises to the cytoplasm. Its function is as follows. An accessory protein needed during the final step in the assembly of 30S ribosomal subunit, possibly for assembly of the head region. Essential for efficient processing of 16S rRNA. May be needed both before and after RbfA during the maturation of 16S rRNA. It has affinity for free ribosomal 30S subunits but not for 70S ribosomes. This is Ribosome maturation factor RimM from Burkholderia ambifaria (strain MC40-6).